Consider the following 74-residue polypeptide: UPF0346 protein YozE (74 aa).

The protein belongs to the UPF0346 family.

This chain is UPF0346 protein YozE (yozE), found in Bacillus subtilis (strain 168).